Reading from the N-terminus, the 128-residue chain is NHP2-like protein 1 (128 aa).

An interaction with U4 snRNA and U4atac snRNA region spans residues 36–48; it reads RKGANEATKTLNR. The interval 96-128 is important for U4 snRNA-binding; the sequence is SRPVIACAVTIKEGSQLKPQIQSLQQSIERLLV.

This sequence belongs to the eukaryotic ribosomal protein eL8 family. Identified in the spliceosome B complex. Component of the U4/U6-U5 tri-snRNP complex. Part of the small subunit (SSU) processome, composed of more than 70 proteins and the RNA chaperone small nucleolar RNA (snoRNA) U3.

It is found in the nucleus. It localises to the nucleolus. Functionally, part of the small subunit (SSU) processome, first precursor of the small eukaryotic ribosomal subunit. During the assembly of the SSU processome in the nucleolus, many ribosome biogenesis factors, an RNA chaperone and ribosomal proteins associate with the nascent pre-rRNA and work in concert to generate RNA folding, modifications, rearrangements and cleavage as well as targeted degradation of pre-ribosomal RNA by the RNA exosome. Involved in pre-mRNA splicing as component of the spliceosome. Binds to the 5'-stem-loop of U4 snRNA and thereby contributes to spliceosome assembly. The protein undergoes a conformational change upon RNA-binding. Core component of box C/D small nucleolar ribonucleoprotein (snoRNP) complexes that function in methylation of multiple sites on ribosomal RNAs (rRNAs) and messenger RNAs (mRNAs). The polypeptide is NHP2-like protein 1 (Xenopus tropicalis (Western clawed frog)).